A 454-amino-acid polypeptide reads, in one-letter code: tRNA modification GTPase MnmE (454 aa).

Residues Arg-23, Glu-80, and Lys-120 each coordinate (6S)-5-formyl-5,6,7,8-tetrahydrofolate. A TrmE-type G domain is found at 216-377 (GMKVVIAGRP…LRNHLKQSMG (162 aa)). Asn-226 lines the K(+) pocket. Residues 226 to 231 (NAGKSS), 245 to 251 (TDIAGTT), 270 to 273 (DTAG), 335 to 338 (NKAD), and 358 to 360 (SAR) each bind GTP. Ser-230 serves as a coordination point for Mg(2+). Positions 245, 247, and 250 each coordinate K(+). Thr-251 contributes to the Mg(2+) binding site. Lys-454 is a binding site for (6S)-5-formyl-5,6,7,8-tetrahydrofolate.

It belongs to the TRAFAC class TrmE-Era-EngA-EngB-Septin-like GTPase superfamily. TrmE GTPase family. Homodimer. Heterotetramer of two MnmE and two MnmG subunits. Requires K(+) as cofactor.

Its subcellular location is the cytoplasm. Functionally, exhibits a very high intrinsic GTPase hydrolysis rate. Involved in the addition of a carboxymethylaminomethyl (cmnm) group at the wobble position (U34) of certain tRNAs, forming tRNA-cmnm(5)s(2)U34. In Escherichia coli (strain SMS-3-5 / SECEC), this protein is tRNA modification GTPase MnmE.